The following is a 415-amino-acid chain: MATRNSPMPLGTAQGDPGEAGTRPGPDASLRDTGAATQLKMKPRKVHKIKAVIIDLGSQYCKCGYAGEPRPTYFISSTVGKRCPEAADAGDTRKWTLVGHELLNTEAPLKLVNPLKHGIVVDWDCVQDIWEYIFRTAMKILPEEHAVLVSDPPLSPSSNREKYAELMFETFGIPAMHVTSQSLLSIYSYGKTSGLVVESGHGVSHVVPISEGDVLPGLTSRADYAGGDLTNYLMQLLNEAGHAFTDDHLHIIEHIKKKCCYAAFLPEEELGLVPEELRVDYELPDGKLITIGQERFRCSEMLFQPSLAGSTQPGLPELTAACLGRCQDTGFKEEMAANVLLCGGCTMLDGFPERFQRELSLLCPGDSPAVAAAPERKTSVWTGGSILASLQAFQQLWVSKEEFEERGSVAIYSKC.

A disordered region spans residues 1–31 (MATRNSPMPLGTAQGDPGEAGTRPGPDASLR). A Phosphoserine modification is found at serine 6.

The protein belongs to the actin family. Detected only in the testis and, to a lesser extent, in the prostate.

Its subcellular location is the cytoplasm. It is found in the cytoskeleton. In Homo sapiens (Human), this protein is Actin-like protein 7B (ACTL7B).